The primary structure comprises 175 residues: 2-oxo-4-hydroxy-4-carboxy-5-ureidoimidazoline decarboxylase (175 aa).

Residue histidine 67 is the Proton donor of the active site. Substrate contacts are provided by residues proline 68, 84-88 (SRGEQ), and 119-123 (FVICA). The Microbody targeting signal motif lies at 173–175 (TKL).

It belongs to the OHCU decarboxylase family. Homodimer.

It is found in the peroxisome. It catalyses the reaction 5-hydroxy-2-oxo-4-ureido-2,5-dihydro-1H-imidazole-5-carboxylate + H(+) = (S)-allantoin + CO2. The protein operates within purine metabolism; urate degradation; (S)-allantoin from urate: step 3/3. In terms of biological role, catalyzes the stereoselective decarboxylation of 2-oxo-4-hydroxy-4-carboxy-5-ureidoimidazoline (OHCU) to (S)-allantoin. In Amia calva (Bowfin), this protein is 2-oxo-4-hydroxy-4-carboxy-5-ureidoimidazoline decarboxylase (urad).